A 617-amino-acid polypeptide reads, in one-letter code: Hemagglutinin glycoprotein (617 aa).

At 1–37 the chain is on the intravirion side; the sequence is MSPQRDRINAFDKDNPHPXXXXXXXXXXXXXXXRPYV. The segment at 1-154 is stalk; that stretch reads MSPQRDRINA…RIKLDYDQYC (154 aa). A helical; Signal-anchor for type II membrane protein membrane pass occupies residues 38 to 58; sequence LLAVLFVMFLSLIGLLAIAGI. The Virion surface segment spans residues 59 to 617; that stretch reads RFHRAAIYTA…VTREDGTNCR (559 aa). Residues asparagine 168, asparagine 187, asparagine 200, asparagine 215, and asparagine 238 are each glycosylated (N-linked (GlcNAc...) asparagine; by host). Cystine bridges form between cysteine 188–cysteine 606, cysteine 287–cysteine 300, cysteine 381–cysteine 494, cysteine 386–cysteine 394, and cysteine 570–cysteine 579. The tract at residues 458 to 543 is interaction with host NECTIN4 receptor; the sequence is PMKSLALGVV…VEHAVVYYVY (86 aa).

This sequence belongs to the paramyxoviruses hemagglutinin-neuraminidase family. Non-sialidase subfamily. Homodimer; disulfide-linked. Further forms homotetramer (dimer of dimers). Interacts (via C-terminus) with human NECTIN4 (via N-terminus); this interaction allows attachment to the respiratory epithelium and viral entry. Interacts (via C-terminus) with human SLAMF1/CD150 (via N-terminus); this interaction allows attachment and viral entry into the CD150-expressing immune cells.

It is found in the virion membrane. It localises to the host cell membrane. Functionally, attaches the virus to the human SLAMF1/CD150 receptor for entry into host dendritic cells, macrophages, activated memory T cells and naive or memory B cells, thereby explaining the long immunosuppression that follows infection. In the respiratory airways, binds to the NECTIN4 receptor for entry into the host cell. Binding of H protein to the receptor induces a conformational change that allows the F protein to trigger virion/cell membranes fusion. The vaccine and laboratory-adapted strains use host CD46 as an alternate receptor. The high degree of interaction between H and CD46 results in down-regulation of the latter from the surface of infected cells, rendering them more sensitive to c3b-mediated complement lysis. This chain is Hemagglutinin glycoprotein (H), found in Homo sapiens (Human).